The chain runs to 550 residues: MDMDNQNTKIYTDKFLAVTSLLFVFISVAGLAIYSQESIKIAATWMQWTTSVFTTPVLLFAFLAIIFTFGLAFSKYGKIKLGEGKPQYSTMSWIFMFILSGIGSSTLYWGFLDWAYYYQTPGLSLPPESAEALKYSVAYSFFHSGLSAWAIYALASISLCYSYHVRKNKGLSLASVIEAVTGFKSTGVVGRLVDLMFLLCMFGALTISLVLTAVTFTNILSQLTGIPNTFMTKVIIILAVSVLFALSSYVGMDKGMQRLSHMVCLGVVLFAIYVLCFGPTQFILNNSLMSFGLMATNFVDMSLFTDPMGDGKFTREWTVFYWLWWISYAPGVALFVTRVSKGRTIKEVIFAMVIGGSVGLWFIFGVFENYSVYSFIHGAVNVPQILSQQGGEVAIGQLLSLLPAGKLMMWIFLGIMVVFLAAHMDAVGYAVSATCTRGLSEGQDPSPNARLFWCVMLTLVPIAMIFSKAPLDTMKTATIVTALPFIVIILIQTYGLVKWLIQDYAKVPSHLIEQQGYDDQEIGLNQTQDEHAKRMQLELASSIKLDRKTS.

12 helical membrane passes run 15-35 (FLAV…AIYS), 53-73 (FTTP…GLAF), 92-112 (SWIF…WGFL), 137-157 (VAYS…LASI), 196-216 (MFLL…AVTF), 230-250 (FMTK…SSYV), 263-283 (VCLG…TQFI), 317-337 (WTVF…LFVT), 347-367 (EVIF…FGVF), 401-421 (LLPA…VFLA), 451-471 (LFWC…KAPL), and 477-497 (ATIV…YGLV).

The protein belongs to the BCCT transporter (TC 2.A.15) family.

The protein resides in the cell inner membrane. Its activity is regulated as follows. Inhibited by the protonophore 3,3',4',5-tetrachlorosalicylanilide (TCS). Not activated by osmolarity. Functionally, catalyzes the energy-dependent uptake of carnitine and is essential for growth on carnitine. Can also mediate the uptake of choline. Is probably a proton:substrate symporter. The chain is Carnitine transporter from Acinetobacter baumannii (strain ATCC 19606 / DSM 30007 / JCM 6841 / CCUG 19606 / CIP 70.34 / NBRC 109757 / NCIMB 12457 / NCTC 12156 / 81).